Consider the following 474-residue polypeptide: Alanine/serine racemase (474 aa).

Pyridoxal 5'-phosphate-binding positions include 139–140 (GS) and Q282. At K308 the chain carries N6-(pyridoxal phosphate)lysine. Residue T336 coordinates pyridoxal 5'-phosphate.

The protein belongs to the class-III pyridoxal-phosphate-dependent aminotransferase family. As to quaternary structure, homohexamer. Pyridoxal 5'-phosphate is required as a cofactor.

It carries out the reaction L-alanine = D-alanine. It catalyses the reaction L-serine = D-serine. Completely inhibited by hydroxylamine hydrochloride. Functionally, catalyzes the interconversion of L-alanine and D-alanine, and L-serine and D-serine. Has weak activity with valine and threonine. The protein is Alanine/serine racemase of Pyrococcus horikoshii (strain ATCC 700860 / DSM 12428 / JCM 9974 / NBRC 100139 / OT-3).